Consider the following 136-residue polypeptide: Organic hydroperoxide resistance protein OhrB (136 aa).

It belongs to the OsmC/Ohr family.

Functionally, involved in organic hydroperoxide resistance. This chain is Organic hydroperoxide resistance protein OhrB (ohrB), found in Bacillus subtilis (strain 168).